The sequence spans 1416 residues: Isonitrile lipopeptide synthase (1416 aa).

Residues Leu188 to Gln215 are a coiled coil. The region spanning Arg965–Pro1028 is the Carrier domain. O-(pantetheine 4'-phosphoryl)serine is present on Ser988.

Belongs to the ATP-dependent AMP-binding enzyme family. It depends on pantetheine 4'-phosphate as a cofactor.

It catalyses the reaction 2 a (3R)-3-isocyanyl-fatty acyl-[ACP] + L-lysine + ATP + 2 NADPH = an isonitrile lipopeptide + 2 holo-[ACP] + AMP + diphosphate + 2 NADP(+). Nonribosomal peptide synthetase (NRPS) involved in the biosynthesis of a unique class of isonitrile lipopeptides (INLPs) that seem to play a role in metal acquisition in M.marinum. Catalyzes the final step in the pathway, i.e. the condensation of a (3R)-3-isocyanyl-fatty acyl-[ACP] to both amino groups of a lysine, producing isonitrile lipopeptides. This is Isonitrile lipopeptide synthase from Mycobacterium marinum (strain ATCC BAA-535 / M).